Reading from the N-terminus, the 443-residue chain is ATP-dependent protease ATPase subunit HslU (443 aa).

ATP contacts are provided by residues Ile-20, 62-67, Asp-255, Glu-321, and Arg-393; that span reads GVGKTE.

This sequence belongs to the ClpX chaperone family. HslU subfamily. A double ring-shaped homohexamer of HslV is capped on each side by a ring-shaped HslU homohexamer. The assembly of the HslU/HslV complex is dependent on binding of ATP.

The protein resides in the cytoplasm. Functionally, ATPase subunit of a proteasome-like degradation complex; this subunit has chaperone activity. The binding of ATP and its subsequent hydrolysis by HslU are essential for unfolding of protein substrates subsequently hydrolyzed by HslV. HslU recognizes the N-terminal part of its protein substrates and unfolds these before they are guided to HslV for hydrolysis. In Helicobacter pylori (strain P12), this protein is ATP-dependent protease ATPase subunit HslU.